A 126-amino-acid chain; its full sequence is Desulfoferrodoxin (126 aa).

9 residues coordinate Fe cation: C10, C13, C29, C30, H49, H69, H75, C116, and H119.

The protein belongs to the desulfoferrodoxin family. In terms of assembly, homodimer. It depends on Fe(3+) as a cofactor. Cu(2+) is required as a cofactor.

It carries out the reaction reduced [rubredoxin] + superoxide + 2 H(+) = oxidized [rubredoxin] + H2O2. Functionally, catalyzes the one-electron reduction of superoxide anion radical to hydrogen peroxide at a nonheme ferrous iron center. Plays a fundamental role in case of oxidative stress via its superoxide detoxification activity. The sequence is that of Desulfoferrodoxin (dfx) from Desulfarculus baarsii (strain ATCC 33931 / DSM 2075 / LMG 7858 / VKM B-1802 / 2st14).